The following is a 39-amino-acid chain: uncharacterized protein (39 aa).

This is an uncharacterized protein from Saccharomyces cerevisiae (strain ATCC 204508 / S288c) (Baker's yeast).